Reading from the N-terminus, the 262-residue chain is Expansin-A21 (262 aa).

Residues 1–29 (MKLLEKMTYVECFMIIMATWFMFISYSHG) form the signal peptide. The 106-residue stretch at 64 to 169 (EGACGYGDLN…RRVPCAKTGG (106 aa)) folds into the Expansin-like EG45 domain. The Expansin-like CBD domain occupies 179 to 258 (NILTILPYNV…SWGFGQTFDG (80 aa)).

This sequence belongs to the expansin family. Expansin A subfamily.

It is found in the secreted. The protein localises to the cell wall. It localises to the membrane. In terms of biological role, causes loosening and extension of plant cell walls by disrupting non-covalent bonding between cellulose microfibrils and matrix glucans. No enzymatic activity has been found. In Arabidopsis thaliana (Mouse-ear cress), this protein is Expansin-A21 (EXPA21).